We begin with the raw amino-acid sequence, 489 residues long: 3-octaprenyl-4-hydroxybenzoate carboxy-lyase (489 aa).

Residue N172 participates in Mn(2+) binding. Prenylated FMN contacts are provided by residues I175–R177, R189–L191, and R194–G195. Residue E238 participates in Mn(2+) binding. The Proton donor role is filled by D287.

The protein belongs to the UbiD family. As to quaternary structure, homohexamer. Prenylated FMN serves as cofactor. Mn(2+) is required as a cofactor.

It localises to the cell membrane. It catalyses the reaction a 4-hydroxy-3-(all-trans-polyprenyl)benzoate + H(+) = a 2-(all-trans-polyprenyl)phenol + CO2. Its pathway is cofactor biosynthesis; ubiquinone biosynthesis. Its function is as follows. Catalyzes the decarboxylation of 3-octaprenyl-4-hydroxy benzoate to 2-octaprenylphenol, an intermediate step in ubiquinone biosynthesis. This is 3-octaprenyl-4-hydroxybenzoate carboxy-lyase from Salmonella paratyphi B (strain ATCC BAA-1250 / SPB7).